Consider the following 303-residue polypeptide: RELT-like protein 2 (303 aa).

The chain crosses the membrane as a helical span at residues 15–35 (LYMLFLLVLVFFLMGLVGFMI). 2 disordered regions span residues 46–67 (CRTS…DDDM) and 111–303 (SSLQ…AGGV). Ser-52 carries the post-translational modification Phosphoserine. Composition is skewed to basic and acidic residues over residues 148-158 (RSKEGKSRPRP) and 172-188 (THIE…DGSP). Positions 194 to 212 (GSGGGQDPGGGQGPGGGQP) are enriched in gly residues.

The protein belongs to the RELT family. As to quaternary structure, interacts with RELT, RELL1, OXSR1, PLSCR1 and TRAF2.

The protein localises to the cell membrane. Induces activation of MAPK14/p38 cascade, when overexpressed. Induces apoptosis, when overexpressed. The polypeptide is RELT-like protein 2 (RELL2) (Bos taurus (Bovine)).